A 48-amino-acid chain; its full sequence is Light-harvesting polypeptide B-885 beta-1 chain (48 aa).

The Cytoplasmic segment spans residues A1–T20. A helical membrane pass occupies residues L21–W43. Residue H37 participates in a bacteriochlorophyll binding. Over R44–Q48 the chain is Periplasmic.

This sequence belongs to the antenna complex beta subunit family. In terms of assembly, the core complex is formed by different alpha and beta chains, binding bacteriochlorophyll molecules, and arranged most probably in tetrameric structures disposed around the reaction center. The non-pigmented gamma chains may constitute additional components.

Its subcellular location is the cell inner membrane. Its function is as follows. Antenna complexes are light-harvesting systems, which transfer the excitation energy to the reaction centers. This Rhodocyclus tenuis (Rhodospirillum tenue) protein is Light-harvesting polypeptide B-885 beta-1 chain.